Reading from the N-terminus, the 232-residue chain is Putative N-acetylmannosamine-6-phosphate 2-epimerase (232 aa).

It belongs to the NanE family.

It catalyses the reaction an N-acyl-D-glucosamine 6-phosphate = an N-acyl-D-mannosamine 6-phosphate. The protein operates within amino-sugar metabolism; N-acetylneuraminate degradation; D-fructose 6-phosphate from N-acetylneuraminate: step 3/5. Converts N-acetylmannosamine-6-phosphate (ManNAc-6-P) to N-acetylglucosamine-6-phosphate (GlcNAc-6-P). In Synechococcus elongatus (strain ATCC 33912 / PCC 7942 / FACHB-805) (Anacystis nidulans R2), this protein is Putative N-acetylmannosamine-6-phosphate 2-epimerase.